The chain runs to 59 residues: Large ribosomal subunit protein bL32 (59 aa).

Residues M1–R16 are compositionally biased toward basic residues. Residues M1–H41 form a disordered region. The segment covering I28 to H41 has biased composition (basic and acidic residues).

Belongs to the bacterial ribosomal protein bL32 family.

This chain is Large ribosomal subunit protein bL32, found in Bartonella henselae (strain ATCC 49882 / DSM 28221 / CCUG 30454 / Houston 1) (Rochalimaea henselae).